A 110-amino-acid polypeptide reads, in one-letter code: V-type proton ATPase subunit F (110 aa).

This sequence belongs to the V-ATPase F subunit family. In terms of assembly, V-ATPase is a heteromultimeric enzyme made up of two complexes: the ATP-hydrolytic V1 complex and the proton translocation V0 complex. The V1 complex consists of three catalytic AB heterodimers that form a heterohexamer, three peripheral stalks each consisting of EG heterodimers, one central rotor including subunits D and F, and the regulatory subunits C and H. The proton translocation complex V0 consists of the proton transport subunit a, a ring of proteolipid subunits c9c'', rotary subunit d, subunits e and f, and two accessory subunits.

Subunit of the V1 complex of vacuolar(H+)-ATPase (V-ATPase), a multisubunit enzyme composed of a peripheral complex (V1) that hydrolyzes ATP and a membrane integral complex (V0) that translocates protons. V-ATPase is responsible for acidifying and maintaining the pH of intracellular compartments and in some cell types, is targeted to the plasma membrane, where it is responsible for acidifying the extracellular environment. The protein is V-type proton ATPase subunit F (atp6s14) of Xenopus laevis (African clawed frog).